A 492-amino-acid polypeptide reads, in one-letter code: N-succinylglutamate 5-semialdehyde dehydrogenase (492 aa).

225–230 provides a ligand contact to NAD(+); sequence GSSNTG. Active-site residues include Glu248 and Cys282.

Belongs to the aldehyde dehydrogenase family. AstD subfamily.

It carries out the reaction N-succinyl-L-glutamate 5-semialdehyde + NAD(+) + H2O = N-succinyl-L-glutamate + NADH + 2 H(+). It participates in amino-acid degradation; L-arginine degradation via AST pathway; L-glutamate and succinate from L-arginine: step 4/5. Functionally, catalyzes the NAD-dependent reduction of succinylglutamate semialdehyde into succinylglutamate. The protein is N-succinylglutamate 5-semialdehyde dehydrogenase of Colwellia psychrerythraea (strain 34H / ATCC BAA-681) (Vibrio psychroerythus).